The sequence spans 93 residues: Cytochrome c oxidase polypeptide 6, mitochondrial (93 aa).

Over 2-33 (STGNESYNLRYPKGFKGYPYNMYKLEGYGTPK) the chain is Mitochondrial matrix. Residues 34 to 53 (GYITLIGVVATLTVSGLFFA) traverse the membrane as a helical segment. The Mitochondrial intermembrane segment spans residues 54–93 (KTRSNKREYPTHNKEWRAKTLAYAKETNADPIYQLPKDKI).

Belongs to the cytochrome c oxidase IV family. As to quaternary structure, component of the cytochrome c oxidase (complex IV, CIV), a multisubunit enzyme composed of a catalytic core of 3 subunits and seevral supernumerary subunits. The complex exists as a monomer or a dimer and forms supercomplexes (SCs) in the inner mitochondrial membrane with ubiquinol-cytochrome c oxidoreductase (cytochrome b-c1 complex, complex III, CIII).

The protein resides in the mitochondrion inner membrane. Its pathway is energy metabolism; oxidative phosphorylation. Functionally, component of the cytochrome c oxidase, the last enzyme in the mitochondrial electron transport chain which drives oxidative phosphorylation. The respiratory chain contains 3 multisubunit complexes succinate dehydrogenase (complex II, CII), ubiquinol-cytochrome c oxidoreductase (cytochrome b-c1 complex, complex III, CIII) and cytochrome c oxidase (complex IV, CIV), that cooperate to transfer electrons derived from NADH and succinate to molecular oxygen, creating an electrochemical gradient over the inner membrane that drives transmembrane transport and the ATP synthase. Cytochrome c oxidase is the component of the respiratory chain that catalyzes the reduction of oxygen to water. Electrons originating from reduced cytochrome c in the intermembrane space (IMS) are transferred via the dinuclear copper A center (CU(A)) of subunit 2 and heme A of subunit 1 to the active site in subunit 1, a binuclear center (BNC) formed by heme A3 and copper B (CU(B)). The BNC reduces molecular oxygen to 2 water molecules using 4 electrons from cytochrome c in the IMS and 4 protons from the mitochondrial matrix. The sequence is that of Cytochrome c oxidase polypeptide 6, mitochondrial (cxfA) from Dictyostelium discoideum (Social amoeba).